The sequence spans 85 residues: UPF0297 protein CD630_12830 (85 aa).

Belongs to the UPF0297 family.

The chain is UPF0297 protein CD630_12830 from Clostridioides difficile (strain 630) (Peptoclostridium difficile).